Here is a 361-residue protein sequence, read N- to C-terminus: tRNA-specific 2-thiouridylase MnmA (361 aa).

ATP-binding positions include 8 to 15 (AMSGGVDS) and methionine 34. Cysteine 104 (nucleophile) is an active-site residue. A disulfide bond links cysteine 104 and cysteine 202. An ATP-binding site is contributed by glycine 128. The segment at 152-154 (KDQ) is interaction with tRNA. The active-site Cysteine persulfide intermediate is cysteine 202. The tract at residues 307–308 (RY) is interaction with tRNA.

It belongs to the MnmA/TRMU family.

It localises to the cytoplasm. It catalyses the reaction S-sulfanyl-L-cysteinyl-[protein] + uridine(34) in tRNA + AH2 + ATP = 2-thiouridine(34) in tRNA + L-cysteinyl-[protein] + A + AMP + diphosphate + H(+). In terms of biological role, catalyzes the 2-thiolation of uridine at the wobble position (U34) of tRNA, leading to the formation of s(2)U34. This chain is tRNA-specific 2-thiouridylase MnmA, found in Caldicellulosiruptor saccharolyticus (strain ATCC 43494 / DSM 8903 / Tp8T 6331).